The chain runs to 220 residues: Uracil-DNA glycosylase (220 aa).

D65 (proton acceptor) is an active-site residue.

This sequence belongs to the uracil-DNA glycosylase (UDG) superfamily. UNG family.

Its subcellular location is the cytoplasm. It carries out the reaction Hydrolyzes single-stranded DNA or mismatched double-stranded DNA and polynucleotides, releasing free uracil.. Its function is as follows. Excises uracil residues from the DNA which can arise as a result of misincorporation of dUMP residues by DNA polymerase or due to deamination of cytosine. This chain is Uracil-DNA glycosylase, found in Bacteroides thetaiotaomicron (strain ATCC 29148 / DSM 2079 / JCM 5827 / CCUG 10774 / NCTC 10582 / VPI-5482 / E50).